The chain runs to 153 residues: 3-hydroxyacyl-[acyl-carrier-protein] dehydratase FabZ (153 aa).

His57 is an active-site residue.

This sequence belongs to the thioester dehydratase family. FabZ subfamily.

The protein localises to the cytoplasm. It carries out the reaction a (3R)-hydroxyacyl-[ACP] = a (2E)-enoyl-[ACP] + H2O. Involved in unsaturated fatty acids biosynthesis. Catalyzes the dehydration of short chain beta-hydroxyacyl-ACPs and long chain saturated and unsaturated beta-hydroxyacyl-ACPs. The sequence is that of 3-hydroxyacyl-[acyl-carrier-protein] dehydratase FabZ from Xanthomonas campestris pv. campestris (strain 8004).